We begin with the raw amino-acid sequence, 209 residues long: Uracil phosphoribosyltransferase (209 aa).

5-phospho-alpha-D-ribose 1-diphosphate-binding positions include R79, R104, and 131–139 (DPMLATGAS). Residues I194 and 199–201 (GDA) contribute to the uracil site. D200 contacts 5-phospho-alpha-D-ribose 1-diphosphate.

This sequence belongs to the UPRTase family. It depends on Mg(2+) as a cofactor.

It catalyses the reaction UMP + diphosphate = 5-phospho-alpha-D-ribose 1-diphosphate + uracil. The protein operates within pyrimidine metabolism; UMP biosynthesis via salvage pathway; UMP from uracil: step 1/1. Its activity is regulated as follows. Allosterically activated by GTP. Functionally, catalyzes the conversion of uracil and 5-phospho-alpha-D-ribose 1-diphosphate (PRPP) to UMP and diphosphate. The chain is Uracil phosphoribosyltransferase from Staphylococcus aureus (strain JH1).